Reading from the N-terminus, the 99-residue chain is Integration host factor subunit alpha (99 aa).

Belongs to the bacterial histone-like protein family. In terms of assembly, heterodimer of an alpha and a beta chain.

Functionally, this protein is one of the two subunits of integration host factor, a specific DNA-binding protein that functions in genetic recombination as well as in transcriptional and translational control. The chain is Integration host factor subunit alpha from Xylella fastidiosa (strain M12).